A 485-amino-acid polypeptide reads, in one-letter code: MPAMVEKGPEVSGKRRGRNNAAASASAAAASAAASAACASPAATAASGAAASSASAAAASAAAAPNNGQNKSLAAAAPNGNSSSNSWEEGSSGSSSDEEHGGGGMRVGPQYQAVVPDFDPAKLARRSQERDNLGMLVWSPNQNLSEAKLDEYIAIAKEKHGYNMEQALGMLFWHKHNIEKSLADLPNFTPFPDEWTVEDKVLFEQAFSFHGKTFHRIQQMLPDKSIASLVKFYYSWKKTRTKTSVMDRHARKQKREREESEDELEEANGNNPIDIEVDQNKESKKEVPPTETVPQVKKEKHSTQAKNRAKRKPPKGMFLSQEDVEAVSANATAATTVLRQLDMELVSVKRQIQNIKQTNSALKEKLDGGIEPYRLPEVIQKCNARWTTEEQLLAVQAIRKYGRDFQAISDVIGNKSVVQVKNFFVNYRRRFNIDEVLQEWEAEHGKEETNGPSNQKPVKSPDNSIKMPEEEDEAPVLDVRYASAS.

Disordered regions lie at residues 1–26 (MPAM…ASAS) and 49–110 (AAAS…VGPQ). Composition is skewed to low complexity over residues 49-64 (AAAS…AAAA) and 74-95 (AAAA…SGSS). The interval 78 to 257 (PNGNSSSNSW…RHARKQKRER (180 aa)) is interaction with HDAC1. An ELM2 domain is found at 103-189 (GGMRVGPQYQ…KSLADLPNFT (87 aa)). A Glycyl lysine isopeptide (Lys-Gly) (interchain with G-Cter in SUMO2) cross-link involves residue K122. S127 carries the post-translational modification Phosphoserine. The SANT 1 domain maps to 190 to 241 (PFPDEWTVEDKVLFEQAFSFHGKTFHRIQQMLPDKSIASLVKFYYSWKKTRT). A coiled-coil region spans residues 244–273 (SVMDRHARKQKREREESEDELEEANGNNPI). Positions 244-314 (SVMDRHARKQ…AKNRAKRKPP (71 aa)) are disordered. Phosphoserine is present on S260. A compositionally biased stretch (basic and acidic residues) spans 278 to 288 (DQNKESKKEVP). Residues 296–384 (VKKEKHSTQA…LPEVIQKCNA (89 aa)) are interaction with KDM1A. Residue K297 forms a Glycyl lysine isopeptide (Lys-Gly) (interchain with G-Cter in SUMO2) linkage. Residues 334–369 (ATTVLRQLDMELVSVKRQIQNIKQTNSALKEKLDGG) adopt a coiled-coil conformation. Residues 381–432 (KCNARWTTEEQLLAVQAIRKYGRDFQAISDVIGNKSVVQVKNFFVNYRRRFN) enclose the SANT 2 domain. A disordered region spans residues 442 to 485 (AEHGKEETNGPSNQKPVKSPDNSIKMPEEEDEAPVLDVRYASAS). Positions 450 to 463 (NGPSNQKPVKSPDN) are enriched in polar residues. S460 carries the post-translational modification Phosphoserine. A Glycyl lysine isopeptide (Lys-Gly) (interchain with G-Cter in SUMO2) cross-link involves residue K466.

The protein belongs to the CoREST family. Interacts directly with GFI1 and GFI1B in a RCOR/GFI/KDM1A/HDAC complex. Interacts with INMS1. Component of a BHC histone deacetylase complex that contains HDAC1, HDAC2, HMG20B/BRAF35, KDM1A, RCOR1/CoREST and PHF21A/BHC80. The BHC complex may also contain ZMYM2, ZNF217, ZMYM3, GSE1 and GTF2I. Interacts with REST. Interacts with the SMARCE1/BAF57, suggesting that the BHC complex may recruit the ATP-dependent chromatin-remodeling SWI-SNF complex. Interacts with SOX2. As to quaternary structure, (Microbial infection) Interacts with herpes virus HSV-1 ICP0 protein; the interaction leads to the disruption of the BHC complex, thereby preventing the BHC complex from repressing transcription of viral genes. Phosphorylated by HSV-1 protein kinases in case of infection. In terms of tissue distribution, ubiquitously expressed.

It localises to the nucleus. Its function is as follows. Essential component of the BHC complex, a corepressor complex that represses transcription of neuron-specific genes in non-neuronal cells. The BHC complex is recruited at RE1/NRSE sites by REST and acts by deacetylating and demethylating specific sites on histones, thereby acting as a chromatin modifier. In the BHC complex, it serves as a molecular beacon for the recruitment of molecular machinery, including MeCP2 and SUV39H1, that imposes silencing across a chromosomal interval. Plays a central role in demethylation of Lys-4 of histone H3 by promoting demethylase activity of KDM1A on core histones and nucleosomal substrates. It also protects KDM1A from the proteasome. Component of a RCOR/GFI/KDM1A/HDAC complex that suppresses, via histone deacetylase (HDAC) recruitment, a number of genes implicated in multilineage blood cell development and controls hematopoietic differentiation. The chain is REST corepressor 1 (RCOR1) from Homo sapiens (Human).